Reading from the N-terminus, the 436-residue chain is 3-ketoacyl-CoA thiolase (436 aa).

The active-site Acyl-thioester intermediate is the Cys99. Catalysis depends on proton acceptor residues His392 and Cys422.

Belongs to the thiolase-like superfamily. Thiolase family. Heterotetramer of two alpha chains (FadJ) and two beta chains (FadI).

The protein localises to the cytoplasm. It carries out the reaction an acyl-CoA + acetyl-CoA = a 3-oxoacyl-CoA + CoA. The protein operates within lipid metabolism; fatty acid beta-oxidation. Catalyzes the final step of fatty acid oxidation in which acetyl-CoA is released and the CoA ester of a fatty acid two carbons shorter is formed. The chain is 3-ketoacyl-CoA thiolase from Shewanella putrefaciens (strain CN-32 / ATCC BAA-453).